The sequence spans 685 residues: Iron(3+)-hydroxamate import system permease protein FhuB (685 aa).

18 helical membrane-spanning segments follow: residues 35 to 55 (ALLL…NFSV), 87 to 107 (LAIS…FQQV), 120 to 140 (VATG…PGAL), 143 to 163 (QFAA…VAWG), 172 to 192 (ILAG…LVIF), 222 to 242 (QLLG…LMGL), 265 to 285 (AIVL…IGLF), 302 to 322 (LMLA…IILW), 328 to 348 (MEVS…LWLL), 373 to 393 (LAFA…ALSF), 416 to 436 (WPRI…GCII), 456 to 476 (AAFG…GWLL), 479 to 499 (GSLG…RGGF), 504 to 524 (MLLA…MLQA), 553 to 573 (AIVM…LTIL), 592 to 612 (IALL…IGPL), 632 to 652 (MPHM…ADWC), and 660 to 680 (YQIP…IYLL).

It belongs to the binding-protein-dependent transport system permease family. FecCD subfamily. As to quaternary structure, the complex is composed of two ATP-binding proteins (FhuC), a transmembrane protein (FhuB) and a solute-binding protein (FhuD).

It localises to the cell inner membrane. In terms of biological role, part of the ABC transporter complex FhuCDB involved in iron(3+)-hydroxamate import. Responsible for the translocation of the substrate across the membrane. Involved in ferrioxamine-mediated iron(III) utilization. This is Iron(3+)-hydroxamate import system permease protein FhuB (fhuB) from Salmonella typhimurium (strain LT2 / SGSC1412 / ATCC 700720).